Here is a 447-residue protein sequence, read N- to C-terminus: N-succinylarginine dihydrolase (447 aa).

Substrate contacts are provided by residues 19 to 28 (AGLSFGNEAS), Asn-110, and 137 to 138 (HR). Glu-174 is an active-site residue. Substrate is bound at residue Arg-213. Residue His-249 is part of the active site. Asp-251 and Asn-364 together coordinate substrate. Cys-370 serves as the catalytic Nucleophile.

Belongs to the succinylarginine dihydrolase family. In terms of assembly, homodimer.

It catalyses the reaction N(2)-succinyl-L-arginine + 2 H2O + 2 H(+) = N(2)-succinyl-L-ornithine + 2 NH4(+) + CO2. It participates in amino-acid degradation; L-arginine degradation via AST pathway; L-glutamate and succinate from L-arginine: step 2/5. Functionally, catalyzes the hydrolysis of N(2)-succinylarginine into N(2)-succinylornithine, ammonia and CO(2). The polypeptide is N-succinylarginine dihydrolase (Yersinia pseudotuberculosis serotype O:1b (strain IP 31758)).